The primary structure comprises 602 residues: Exopolysaccharide phosphotransferase SCO2594 (602 aa).

Residues 251–271 (PRAGEDLDAGDGAAGGPRPGL) are disordered.

This sequence belongs to the stealth family.

The protein is Exopolysaccharide phosphotransferase SCO2594 of Streptomyces coelicolor (strain ATCC BAA-471 / A3(2) / M145).